Reading from the N-terminus, the 346-residue chain is Tetraacyldisaccharide 4'-kinase (346 aa).

An ATP-binding site is contributed by 54-61 (TVGGAGKT).

This sequence belongs to the LpxK family.

The enzyme catalyses a lipid A disaccharide + ATP = a lipid IVA + ADP + H(+). The protein operates within glycolipid biosynthesis; lipid IV(A) biosynthesis; lipid IV(A) from (3R)-3-hydroxytetradecanoyl-[acyl-carrier-protein] and UDP-N-acetyl-alpha-D-glucosamine: step 6/6. Functionally, transfers the gamma-phosphate of ATP to the 4'-position of a tetraacyldisaccharide 1-phosphate intermediate (termed DS-1-P) to form tetraacyldisaccharide 1,4'-bis-phosphate (lipid IVA). The chain is Tetraacyldisaccharide 4'-kinase from Sinorhizobium fredii (strain NBRC 101917 / NGR234).